The sequence spans 641 residues: MTEFSKTPLLDTIRTPEDLRKLRIDQVRQVADELRLETIDAVSVTGGHFGAGLGVVELTTALHYVFDTPRDRLIWDVGHQAYPHKILTGRRDRIRTLRTGGGLSGFTKRTESDHDPFGAGHSSTSISAGLGMAVASELAGKKNNVIAVIGDGSISAGMAYEAMNNAGAMNSRLIVILNDNNMSIAPPVGAMSAYLSRLYSGKTYRSLREAGKQIGKHLPKLIADRAARAEEYSRGFMMGGGTLFEELGFYYVGPVDGHNLDHLLPILQNVRDADTGPFLIHVVTQKGKGYGPAEAAADKYHAVVKFDIATGAQAKAKSNAPSYQNVFGQSLVKEAQKDDKIVGITAAMPSGTGIDIFEKAFPKRTFDVGIAEQHAVTFAAGLATEGYKPFCAIYSTFLQRAYDQIVHDVAIQKLPVRFAIDRAGLVGADGATHAGSFDNAYLGCLPNMVIMAAADEAELVHMVATQVAIDDRPSAVRYPRGEGRGVEMPEVGIPLEIGKGRVIRQGNKVALLSFGTRLAEAEKAADELATLGLSTTVADARFMKPLDVELVLKLARDHEVLLTIEEGSIGGFGSHVMQTLAEHGMLDGEVKMRALVLPDVFMDHDNPVAMYARAGLDAKAIVKKVFDVLGKDAATETSKLA.

Thiamine diphosphate contacts are provided by residues His79 and 120 to 122 (GHS). Asp151 contributes to the Mg(2+) binding site. Residues 152-153 (GS), Asn180, Tyr290, and Glu372 contribute to the thiamine diphosphate site. Residue Asn180 coordinates Mg(2+).

It belongs to the transketolase family. DXPS subfamily. Homodimer. The cofactor is Mg(2+). It depends on thiamine diphosphate as a cofactor.

It catalyses the reaction D-glyceraldehyde 3-phosphate + pyruvate + H(+) = 1-deoxy-D-xylulose 5-phosphate + CO2. It functions in the pathway metabolic intermediate biosynthesis; 1-deoxy-D-xylulose 5-phosphate biosynthesis; 1-deoxy-D-xylulose 5-phosphate from D-glyceraldehyde 3-phosphate and pyruvate: step 1/1. Catalyzes the acyloin condensation reaction between C atoms 2 and 3 of pyruvate and glyceraldehyde 3-phosphate to yield 1-deoxy-D-xylulose-5-phosphate (DXP). The polypeptide is 1-deoxy-D-xylulose-5-phosphate synthase (Rhodopseudomonas palustris (strain TIE-1)).